The chain runs to 232 residues: Ethylene-responsive transcription factor ERF025 (232 aa).

Residues 1 to 29 show a composition bias toward polar residues; it reads MSNNNNSPTTVNQETTTSREVSITLPTDQ. The interval 1-63 is disordered; the sequence is MSNNNNSPTT…TATGLSGKHS (63 aa). A compositionally biased stretch (low complexity) spans 30–50; sequence SPQTSPGSSSSPSPRPSGGSP. A DNA-binding region (AP2/ERF) is located at residues 64–120; the sequence is IFRGIRLRNGKWVSEIREPRKTTRIWLGTYPVPEMAAAAYDVAALALKGPDAVLNFP. Positions 213–232 are disordered; it reads PTMEDDSPENHEGDNLWSYK.

The protein belongs to the AP2/ERF transcription factor family. ERF subfamily.

It is found in the nucleus. Probably acts as a transcriptional activator. Binds to the GCC-box pathogenesis-related promoter element. May be involved in the regulation of gene expression by stress factors and by components of stress signal transduction pathways. This Arabidopsis thaliana (Mouse-ear cress) protein is Ethylene-responsive transcription factor ERF025 (ERF025).